The chain runs to 1305 residues: Nonribosomal peptide synthetase hkm11 (1305 aa).

The segment at 278–672 (TYGELDRWAK…GEIEHHLRPK (395 aa)) is adenylation. The Carrier domain maps to 788–864 (APTTEQEALL…SLASRMRQYN (77 aa)). Residue Ser825 is modified to O-(pantetheine 4'-phosphoryl)serine. The tract at residues 926–1166 (KGQLDRHQLQ…LCLNITAVRV (241 aa)) is condensation.

It belongs to the NRP synthetase family.

The catalysed reaction is hancockiamide D + (E)-cinnamate + ATP = hancockiamide A + AMP + diphosphate. It carries out the reaction hancockiamide H + (E)-cinnamate + ATP = hancockiamide G + AMP + diphosphate. Its pathway is secondary metabolite biosynthesis. Nonribosomal peptide synthetase; part of the gene cluster that mediates the biosynthesis of hancockiamides, an unusual new family of N-cinnamoylated piperazines. The NRPS hkm10 and the NmrA-like reductase hkm9 are proposed to convert two molecules of L-Phe to the intermediary piperazine called xenocockiamide A. Xenocockiamide A is then converted to hancockiamide D via a series of hydroxylations and O-methylations. The tyrosinase hkm6 may catalyze an aromatic hydroxylation, then the 2-oxoglutarate-dependent Fe(II) dioxygenase hkm4 and the FAD-dependent phenol hydroxylase hkm7 may catalyze consecutive hydroxylations to install 2 more hydroxy groups, and the methyltransferase hkm8 probably catalyzes two methylations using 2 molecules of S-adenosyl-L-methionine (SAM). The NRPS hkm11 activates and transfers trans-cinnamate supplied by the PAL hkm12 to hancockiamide D and produces hancockiamide A. NRPS Hkm11 has the flexibility to tolerate the bulky hancockiamide G as a substrate and the absence of the acetyl-transferase hkm3 opens up the opportunity for hkm11 to introduce a second N-cinnamoyl moiety. The cytochrome P450 monooxygenase hkm5 catalyzes the methylenedioxy bridge formation, converting hancockiamide A into hancockiamide G. Hkm5 can also convert hancockiamide B into hancockiamide C, and hancockiamide D into hancockiamide H. The N-acetyltransferase hkm3 finally transfers an acetyl group to 1-N of piperazine, converting hancockiamide A into hancockiamide B and hancockiamide G into hancockiamide C. The chain is Nonribosomal peptide synthetase hkm11 from Aspergillus hancockii.